Consider the following 131-residue polypeptide: Fumarate reductase subunit C (131 aa).

The next 3 helical transmembrane spans lie at 30-50 (EGTA…LFAL), 63-83 (FLQN…ALLH), and 109-129 (IIKS…FVAL).

Belongs to the FrdC family. As to quaternary structure, part of an enzyme complex containing four subunits: a flavoprotein (FrdA), an iron-sulfur protein (FrdB), and two hydrophobic anchor proteins (FrdC and FrdD).

The protein resides in the cell inner membrane. Two distinct, membrane-bound, FAD-containing enzymes are responsible for the catalysis of fumarate and succinate interconversion; fumarate reductase is used in anaerobic growth, and succinate dehydrogenase is used in aerobic growth. Anchors the catalytic components of the fumarate reductase complex to the cell inner membrane, binds quinones. The sequence is that of Fumarate reductase subunit C from Shigella boydii serotype 4 (strain Sb227).